Here is a 300-residue protein sequence, read N- to C-terminus: N-acetylmuramic acid 6-phosphate etherase (300 aa).

An SIS domain is found at 57 to 220 (VSAAFARQGR…SSAAMIRSGK (164 aa)). Glu-85 acts as the Proton donor in catalysis. The active site involves Glu-116.

This sequence belongs to the GCKR-like family. MurNAc-6-P etherase subfamily. Homodimer.

It catalyses the reaction N-acetyl-D-muramate 6-phosphate + H2O = N-acetyl-D-glucosamine 6-phosphate + (R)-lactate. It functions in the pathway amino-sugar metabolism; N-acetylmuramate degradation. The protein operates within amino-sugar metabolism; 1,6-anhydro-N-acetylmuramate degradation. Its pathway is cell wall biogenesis; peptidoglycan recycling. Specifically catalyzes the cleavage of the D-lactyl ether substituent of MurNAc 6-phosphate, producing GlcNAc 6-phosphate and D-lactate. Together with AnmK, is also required for the utilization of anhydro-N-acetylmuramic acid (anhMurNAc) either imported from the medium or derived from its own cell wall murein, and thus plays a role in cell wall recycling. This chain is N-acetylmuramic acid 6-phosphate etherase, found in Edwardsiella ictaluri (strain 93-146).